A 211-amino-acid chain; its full sequence is Octanoyltransferase (211 aa).

Positions 32 to 211 (DHEPEIIYLV…IQTEFNKIFK (180 aa)) constitute a BPL/LPL catalytic domain. Substrate is bound by residues 71 to 78 (RGGKFTFH), 145 to 147 (AIG), and 158 to 160 (GVA). The active-site Acyl-thioester intermediate is C176.

This sequence belongs to the LipB family.

The protein localises to the cytoplasm. It catalyses the reaction octanoyl-[ACP] + L-lysyl-[protein] = N(6)-octanoyl-L-lysyl-[protein] + holo-[ACP] + H(+). It functions in the pathway protein modification; protein lipoylation via endogenous pathway; protein N(6)-(lipoyl)lysine from octanoyl-[acyl-carrier-protein]: step 1/2. Catalyzes the transfer of endogenously produced octanoic acid from octanoyl-acyl-carrier-protein onto the lipoyl domains of lipoate-dependent enzymes. Lipoyl-ACP can also act as a substrate although octanoyl-ACP is likely to be the physiological substrate. This is Octanoyltransferase from Rickettsia massiliae (strain Mtu5).